Consider the following 702-residue polypeptide: Amino-acid racemase (702 aa).

Over 1–12 (MKHRANGIDLFR) the chain is Cytoplasmic. The chain crosses the membrane as a helical span at residues 13–33 (IFAATMVVAIHTFPFQSIAPF). Topologically, residues 34–39 (LDEVIT) are extracellular. Residues 40-60 (LTVFRVAVPFFFMITGYFLLG) form a helical membrane-spanning segment. The Cytoplasmic portion of the chain corresponds to 61–77 (RLSLNFSYNNNQRVKKY). Residues 78-98 (LYKIGMIYLYSILLYFPLSLL) form a helical membrane-spanning segment. Topologically, residues 99-120 (NGTISLKMNILLLLKVFIFDGT) are extracellular. The chain crosses the membrane as a helical span at residues 121–141 (FYHLWYFPASIIGTILVTLLL). A topological domain (cytoplasmic) is located at residue R142. The chain crosses the membrane as a helical span at residues 143-163 (SIGFKLTVAFSTCLYLVGLGG). Topologically, residues 164 to 191 (DSWYGITNQVPLLNKLYTFIFSWSDYTR) are extracellular. A helical membrane pass occupies residues 192 to 212 (SGVFFTPVFLCLGIFAYRVSK). Residues 213-218 (KLTASK) lie on the Cytoplasmic side of the membrane. The chain crosses the membrane as a helical span at residues 219–239 (ILNLLFYVFIIGMTFESIFLH). Over 240–248 (RFTNVKHDS) the chain is Extracellular. The chain crosses the membrane as a helical span at residues 249 to 269 (MYLLLPSCALILFLMLLNWQP). The Cytoplasmic portion of the chain corresponds to 270–276 (KLKVKES). A helical transmembrane segment spans residues 277 to 297 (ADLTLLVYILHPLVIVIVHSI). The Extracellular segment spans residues 298 to 307 (SKYIPILKNS). Residues 308–328 (LLNFLLVVVCSFILAQLLLNL) traverse the membrane as a helical segment. Residues 329-702 (KRKLRVSKQK…LGSRLGTELN (374 aa)) lie on the Cytoplasmic side of the membrane. A racemase region spans residues 337 to 702 (QKIPFERASK…LGSRLGTELN (366 aa)). K375 serves as the catalytic Proton acceptor. The residue at position 375 (K375) is an N6-(pyridoxal phosphate)lysine. A substrate-binding site is contributed by R469. Y601 (proton acceptor) is an active-site residue. A substrate-binding site is contributed by M650.

In the N-terminal section; belongs to the acyltransferase 3 family. It in the C-terminal section; belongs to the alanine racemase family. Requires pyridoxal 5'-phosphate as cofactor.

The protein resides in the cell membrane. The sequence is that of Amino-acid racemase (vanTE) from Enterococcus faecalis (Streptococcus faecalis).